The sequence spans 837 residues: Outer membrane usher protein HifC (837 aa).

Positions 1-26 are cleaved as a signal peptide; that stretch reads MKTKNFPLNKIAFACTLLLANPVAWA. Residues Cys-813 and Cys-833 are joined by a disulfide bond.

It belongs to the fimbrial export usher family.

It is found in the cell outer membrane. Its function is as follows. Essential for piliation. The protein is Outer membrane usher protein HifC (hifC) of Haemophilus influenzae.